The chain runs to 148 residues: SsrA-binding protein (148 aa).

A compositionally biased stretch (basic and acidic residues) spans 129–142; it reads ETEKKRDWEREKAR. The tract at residues 129–148 is disordered; it reads ETEKKRDWEREKARIMRAGT.

This sequence belongs to the SmpB family.

It is found in the cytoplasm. Functionally, required for rescue of stalled ribosomes mediated by trans-translation. Binds to transfer-messenger RNA (tmRNA), required for stable association of tmRNA with ribosomes. tmRNA and SmpB together mimic tRNA shape, replacing the anticodon stem-loop with SmpB. tmRNA is encoded by the ssrA gene; the 2 termini fold to resemble tRNA(Ala) and it encodes a 'tag peptide', a short internal open reading frame. During trans-translation Ala-aminoacylated tmRNA acts like a tRNA, entering the A-site of stalled ribosomes, displacing the stalled mRNA. The ribosome then switches to translate the ORF on the tmRNA; the nascent peptide is terminated with the 'tag peptide' encoded by the tmRNA and targeted for degradation. The ribosome is freed to recommence translation, which seems to be the essential function of trans-translation. The protein is SsrA-binding protein of Burkholderia lata (strain ATCC 17760 / DSM 23089 / LMG 22485 / NCIMB 9086 / R18194 / 383).